The primary structure comprises 700 residues: Polyribonucleotide nucleotidyltransferase (700 aa).

Mg(2+)-binding residues include D484 and D490. The region spanning 551–610 (PRVIRMVVDPEKIREIIGPGGKTISKIIAETGVKIDIEEDGRLYITASDLRSGERAKQMI) is the KH domain. An S1 motif domain is found at 620–688 (GEIYLGKVLR…KLGRISLSRK (69 aa)).

It belongs to the polyribonucleotide nucleotidyltransferase family. Mg(2+) serves as cofactor.

The protein resides in the cytoplasm. The enzyme catalyses RNA(n+1) + phosphate = RNA(n) + a ribonucleoside 5'-diphosphate. Functionally, involved in mRNA degradation. Catalyzes the phosphorolysis of single-stranded polyribonucleotides processively in the 3'- to 5'-direction. The polypeptide is Polyribonucleotide nucleotidyltransferase (Thermoanaerobacter sp. (strain X514)).